Consider the following 317-residue polypeptide: Melanocyte-stimulating hormone receptor (317 aa).

Residues 1-37 (MPVLGSQRRLLGSLNCTPPATFPLMLAPNRTGPQCLE) are Extracellular-facing. N-linked (GlcNAc...) asparagine glycosylation is present at asparagine 29. The helical transmembrane segment at 38–63 (VSIPNGLFLSLGLVSLVENVLVVAAI) threads the bilayer. Over 64–72 (AKNSNLHSP) the chain is Cytoplasmic. The helical transmembrane segment at 73 to 93 (MYYFICCLAVSDLLVSVSNVL) threads the bilayer. At 94–118 (ETAVMLLLEAGALAARAAVVQQLDN) the chain is on the extracellular side. A helical transmembrane segment spans residues 119-140 (VIDVLICGSMVSSLCFLGAIAV). The Cytoplasmic portion of the chain corresponds to 141-163 (DRYISIFYALRYHSVVTLPRAWR). The helical transmembrane segment at 164–183 (IIAAIWVASILTSLLFITYY) threads the bilayer. Over 184–191 (NHTVVLLC) the chain is Extracellular. The chain crosses the membrane as a helical span at residues 192–211 (LVGFFIAMLALMAVLYVHML). Topologically, residues 212-240 (ARACQHARGIARLQKRQRPIHRGFGLKGA) are cytoplasmic. The helical transmembrane segment at 241–266 (ATLTILLGVFFLCWGPFFLHLSLIVL) threads the bilayer. Residues 267–279 (CPQHPTCGCIFKN) lie on the Extracellular side of the membrane. A helical transmembrane segment spans residues 280–300 (FNLFLALIICNAIVDPLIYAF). Over 301 to 317 (RSQELRKTLQEVLQCSW) the chain is Cytoplasmic. Cysteine 315 carries the S-palmitoyl cysteine lipid modification.

This sequence belongs to the G-protein coupled receptor 1 family. In terms of assembly, interacts with MGRN1, but does not undergo MGRN1-mediated ubiquitination; this interaction competes with GNAS-binding and thus inhibits agonist-induced cAMP production. Interacts with OPN3; the interaction results in a decrease in MC1R-mediated cAMP signaling and ultimately a decrease in melanin production in melanocytes.

Its subcellular location is the cell membrane. Receptor for MSH (alpha, beta and gamma) and ACTH. The activity of this receptor is mediated by G proteins which activate adenylate cyclase. Mediates melanogenesis, the production of eumelanin (black/brown) and phaeomelanin (red/yellow), via regulation of cAMP signaling in melanocytes. This chain is Melanocyte-stimulating hormone receptor (MC1R), found in Rangifer tarandus (Reindeer).